Here is a 612-residue protein sequence, read N- to C-terminus: Isocitrate dehydrogenase kinase/phosphatase (612 aa).

ATP-binding positions include 327 to 333 (APGIKGL) and lysine 348. The active site involves aspartate 383. A disordered region spans residues 593–612 (AGRASPEPDAPADARSVRVA).

It belongs to the AceK family.

It is found in the cytoplasm. The enzyme catalyses L-seryl-[isocitrate dehydrogenase] + ATP = O-phospho-L-seryl-[isocitrate dehydrogenase] + ADP + H(+). Bifunctional enzyme which can phosphorylate or dephosphorylate isocitrate dehydrogenase (IDH) on a specific serine residue. This is a regulatory mechanism which enables bacteria to bypass the Krebs cycle via the glyoxylate shunt in response to the source of carbon. When bacteria are grown on glucose, IDH is fully active and unphosphorylated, but when grown on acetate or ethanol, the activity of IDH declines drastically concomitant with its phosphorylation. The protein is Isocitrate dehydrogenase kinase/phosphatase of Paraburkholderia phytofirmans (strain DSM 17436 / LMG 22146 / PsJN) (Burkholderia phytofirmans).